Reading from the N-terminus, the 160-residue chain is Cytochrome b6-f complex subunit 4 (160 aa).

Helical transmembrane passes span 36-56 (LLYIPPVVIPGTIACTVGLAV), 95-115 (LLGVLLMAAVPAGLLVVPFPE), and 131-151 (TVFSAGTAVAPWLGIGAALPI).

It belongs to the cytochrome b family. PetD subfamily. In terms of assembly, the 4 large subunits of the cytochrome b6-f complex are cytochrome b6, subunit IV (17 kDa polypeptide, petD), cytochrome f and the Rieske protein, while the 4 small subunits are petG, petL, petM and petN. The complex functions as a dimer.

It localises to the plastid. The protein localises to the chloroplast thylakoid membrane. Component of the cytochrome b6-f complex, which mediates electron transfer between photosystem II (PSII) and photosystem I (PSI), cyclic electron flow around PSI, and state transitions. The protein is Cytochrome b6-f complex subunit 4 of Huperzia lucidula (Shining clubmoss).